The following is a 486-amino-acid chain: N-succinylglutamate 5-semialdehyde dehydrogenase (486 aa).

220–225 (GSSRTG) contributes to the NAD(+) binding site. Residues E243 and C277 contribute to the active site.

Belongs to the aldehyde dehydrogenase family. AstD subfamily.

The catalysed reaction is N-succinyl-L-glutamate 5-semialdehyde + NAD(+) + H2O = N-succinyl-L-glutamate + NADH + 2 H(+). It functions in the pathway amino-acid degradation; L-arginine degradation via AST pathway; L-glutamate and succinate from L-arginine: step 4/5. In terms of biological role, catalyzes the NAD-dependent reduction of succinylglutamate semialdehyde into succinylglutamate. This chain is N-succinylglutamate 5-semialdehyde dehydrogenase, found in Shewanella halifaxensis (strain HAW-EB4).